We begin with the raw amino-acid sequence, 177 residues long: MNGGHIQLIIGPMFSGKSTELIRRVRRYQIAQYKCVTIKYSNDNRYGTGLWTHDKNNFAALEVTKLCDVLEAITDFSVIGIDEGQFFPDIVEFCERMANEGKIVIVAALDGTFQRRPFNNILNLIPLSEMVVKLTAVCMKCFKEASFSKRLGTETEIEIIGGNDMYQSVCRKCYIDS.

11-18 (GPMFSGKS) lines the ATP pocket. Residue Glu83 is the Proton acceptor of the active site. Residue Phe113 coordinates substrate. Zn(2+)-binding residues include Cys138 and Cys141. A substrate-binding site is contributed by 157–161 (IEIIG). 2 residues coordinate Zn(2+): Cys170 and Cys173.

It belongs to the thymidine kinase family. As to quaternary structure, homotetramer. Two molecules of substrate bind to each enzyme tetramer.

It carries out the reaction thymidine + ATP = dTMP + ADP + H(+). Its function is as follows. Phosphorylates thymidine and thymidine analogs, such as azidothymidine (AZT). Part of the salvage pathway for pyrimidine deoxyribonucleotide synthesis. This Cynomys gunnisoni (Gunnison's prairie dog) protein is Thymidine kinase (OPG101).